An 89-amino-acid chain; its full sequence is Small ribosomal subunit protein uS15 (89 aa).

It belongs to the universal ribosomal protein uS15 family. In terms of assembly, part of the 30S ribosomal subunit. Forms a bridge to the 50S subunit in the 70S ribosome, contacting the 23S rRNA.

Functionally, one of the primary rRNA binding proteins, it binds directly to 16S rRNA where it helps nucleate assembly of the platform of the 30S subunit by binding and bridging several RNA helices of the 16S rRNA. Its function is as follows. Forms an intersubunit bridge (bridge B4) with the 23S rRNA of the 50S subunit in the ribosome. The chain is Small ribosomal subunit protein uS15 from Serratia proteamaculans (strain 568).